Reading from the N-terminus, the 243-residue chain is Myrosinase MB2 (243 aa).

The N-linked (GlcNAc...) asparagine glycan is linked to asparagine 30. Residue tyrosine 51 participates in substrate binding. Glutamate 125 serves as the catalytic Nucleophile. Substrate is bound by residues tryptophan 173 and 180–181 (EF). Asparagine 216 carries N-linked (GlcNAc...) asparagine glycosylation.

Belongs to the glycosyl hydrolase 1 family. Homodimer. As to expression, in vacuoles called myrosin grains of a certain class of cells, myrosin cells, distributed in the cotyledons and the axis of the embryo as well as in different organs of the growing plant.

Its subcellular location is the vacuole. It carries out the reaction a thioglucoside + H2O = a sugar + a thiol.. In terms of biological role, degradation of glucosinolates (glucose residue linked by a thioglucoside bound to an amino acid derivative) to glucose, sulfate and any of the products: thiocyanates, isothiocyanates, nitriles, epithionitriles or oxazolidine-2-thiones. This Sinapis alba (White mustard) protein is Myrosinase MB2.